A 429-amino-acid polypeptide reads, in one-letter code: MFS-type efflux pump MSMEG_3705 (429 aa).

12 helical membrane passes run 21–41 (AWAAVGVLALVGTLNYVDRFL), 59–79 (AIGVINGFGFLIVYAVMGIAV), 86–106 (GAFGAVVAGCLTLWGTMTMLG), 115–137 (LALTRVGVAIGEAGSTPAAHAYV), 150–170 (LAVITIAIPLASTASLLGGGL), 181–201 (FVIMGAVSVVLAPLVLLVVGV), 228–248 (FLIVVAGTAFISAAGYSLTTF), 264–284 (VGVEYGLATGAIGVLGLLIVG), 299–319 (LWIVVTLTLVLLPASVLAFVV), 327–347 (LFLALSYAIGTSYLAPSIAAI), 361–381 (AMFLFFNAVFGSVGPFVVGML), and 397–417 (ALLLLVAAMQLVGAICYWLAS).

The protein belongs to the major facilitator superfamily.

Its subcellular location is the cell inner membrane. Its function is as follows. Probably plays a role in bacterial growth and resistance to antibiotics. This is MFS-type efflux pump MSMEG_3705 from Mycolicibacterium smegmatis (strain ATCC 700084 / mc(2)155) (Mycobacterium smegmatis).